A 244-amino-acid polypeptide reads, in one-letter code: Small ribosomal subunit protein uS2m (244 aa).

The protein belongs to the universal ribosomal protein uS2 family.

The protein localises to the mitochondrion. This is Small ribosomal subunit protein uS2m (mrps2) from Dictyostelium discoideum (Social amoeba).